Reading from the N-terminus, the 229-residue chain is Ras-related protein RABA6b (229 aa).

GTP is bound at residue 20–27; the sequence is GDSAVGKS. The Effector region motif lies at 42–50; that stretch reads SKPTIGVDF. GTP-binding positions include 68-72, 126-129, and 156-157; these read DTAGQ, NKSD, and SA. Residues cysteine 226 and cysteine 227 are each lipidated (S-geranylgeranyl cysteine).

Belongs to the small GTPase superfamily. Rab family.

The protein localises to the cell membrane. Its function is as follows. Intracellular vesicle trafficking and protein transport. This chain is Ras-related protein RABA6b (RABA6B), found in Arabidopsis thaliana (Mouse-ear cress).